A 427-amino-acid polypeptide reads, in one-letter code: MNFYVEVLGCPKNEADCALLKSHLRKMGNNIVDNLSDADAVIIDTCGFILDAKKESIEEILSYVEYKKGKNLKVFVTGCLVQRFGKELKKEIPEVDGWFGVLPPKEIATHIGKRNVIPEVPEPVYNFEGRVDNGQYAYVKISDGCDRACSFCTIPLFKGSFKSRKIDDILKEIEFLIERKIKEIILVAQDTTGYGIDIYRKQMLPELLKRINDLSGDFWVRVMYMHPDHITDDIIEAFSYDKVLKYFDIPVQNGSDKILKLMNRSRKTRQLYSLFEKIRNFYSDAILRTSIIVGFPGETRKDFDETLKFIKEVKFDRLGAFIYSDEEEASSFSLSGKVPREIAEERLEELMDIQSQISFEKNEKLVGKKLKVLFDEEEDGVLIGRSYMDAPEIDANVFVRGEFKKGFFDVKITSADIYDLEGEIVEE.

Residues 1–116 form the MTTase N-terminal domain; it reads MNFYVEVLGC…IATHIGKRNV (116 aa). [4Fe-4S] cluster contacts are provided by cysteine 10, cysteine 46, cysteine 79, cysteine 145, cysteine 149, and cysteine 152. Residues 131-360 enclose the Radical SAM core domain; sequence VDNGQYAYVK…MDIQSQISFE (230 aa). The 64-residue stretch at 363 to 426 folds into the TRAM domain; the sequence is EKLVGKKLKV…IYDLEGEIVE (64 aa).

This sequence belongs to the methylthiotransferase family. RimO subfamily. Requires [4Fe-4S] cluster as cofactor.

It is found in the cytoplasm. It catalyses the reaction L-aspartate(89)-[ribosomal protein uS12]-hydrogen + (sulfur carrier)-SH + AH2 + 2 S-adenosyl-L-methionine = 3-methylsulfanyl-L-aspartate(89)-[ribosomal protein uS12]-hydrogen + (sulfur carrier)-H + 5'-deoxyadenosine + L-methionine + A + S-adenosyl-L-homocysteine + 2 H(+). In terms of biological role, catalyzes the methylthiolation of an aspartic acid residue of ribosomal protein uS12. This chain is Ribosomal protein uS12 methylthiotransferase RimO, found in Thermosipho melanesiensis (strain DSM 12029 / CIP 104789 / BI429).